The chain runs to 124 residues: Urease subunit beta (124 aa).

This sequence belongs to the urease beta subunit family. As to quaternary structure, heterotrimer of UreA (gamma), UreB (beta) and UreC (alpha) subunits. Three heterotrimers associate to form the active enzyme.

The protein localises to the cytoplasm. It catalyses the reaction urea + 2 H2O + H(+) = hydrogencarbonate + 2 NH4(+). The protein operates within nitrogen metabolism; urea degradation; CO(2) and NH(3) from urea (urease route): step 1/1. The protein is Urease subunit beta of Bacillus velezensis (strain DSM 23117 / BGSC 10A6 / LMG 26770 / FZB42) (Bacillus amyloliquefaciens subsp. plantarum).